We begin with the raw amino-acid sequence, 156 residues long: Endoribonuclease YbeY (156 aa).

Positions 122, 126, and 132 each coordinate Zn(2+).

Belongs to the endoribonuclease YbeY family. It depends on Zn(2+) as a cofactor.

The protein localises to the cytoplasm. Its function is as follows. Single strand-specific metallo-endoribonuclease involved in late-stage 70S ribosome quality control and in maturation of the 3' terminus of the 16S rRNA. The chain is Endoribonuclease YbeY from Pediococcus pentosaceus (strain ATCC 25745 / CCUG 21536 / LMG 10740 / 183-1w).